The sequence spans 173 residues: Adenine phosphoribosyltransferase (173 aa).

Belongs to the purine/pyrimidine phosphoribosyltransferase family. In terms of assembly, homodimer.

Its subcellular location is the cytoplasm. The enzyme catalyses AMP + diphosphate = 5-phospho-alpha-D-ribose 1-diphosphate + adenine. The protein operates within purine metabolism; AMP biosynthesis via salvage pathway; AMP from adenine: step 1/1. Catalyzes a salvage reaction resulting in the formation of AMP, that is energically less costly than de novo synthesis. The chain is Adenine phosphoribosyltransferase from Desulfitobacterium hafniense (strain Y51).